We begin with the raw amino-acid sequence, 304 residues long: Glycine--tRNA ligase alpha subunit (304 aa).

Belongs to the class-II aminoacyl-tRNA synthetase family. In terms of assembly, tetramer of two alpha and two beta subunits.

It is found in the cytoplasm. It catalyses the reaction tRNA(Gly) + glycine + ATP = glycyl-tRNA(Gly) + AMP + diphosphate. The sequence is that of Glycine--tRNA ligase alpha subunit from Afipia carboxidovorans (strain ATCC 49405 / DSM 1227 / KCTC 32145 / OM5) (Oligotropha carboxidovorans).